The chain runs to 318 residues: NAD kinase (318 aa).

Residue aspartate 80 is the Proton acceptor of the active site. NAD(+) contacts are provided by residues 80 to 81 (DG), arginine 85, 155 to 156 (NE), aspartate 185, and 196 to 201 (TAYAFS).

It belongs to the NAD kinase family. It depends on a divalent metal cation as a cofactor.

The protein resides in the cytoplasm. The catalysed reaction is NAD(+) + ATP = ADP + NADP(+) + H(+). Its function is as follows. Involved in the regulation of the intracellular balance of NAD and NADP, and is a key enzyme in the biosynthesis of NADP. Catalyzes specifically the phosphorylation on 2'-hydroxyl of the adenosine moiety of NAD to yield NADP. The protein is NAD kinase of Corynebacterium efficiens (strain DSM 44549 / YS-314 / AJ 12310 / JCM 11189 / NBRC 100395).